The following is a 148-amino-acid chain: 3-hydroxyacyl-[acyl-carrier-protein] dehydratase FabZ (148 aa).

The active site involves histidine 50.

It belongs to the thioester dehydratase family. FabZ subfamily.

It is found in the cytoplasm. The catalysed reaction is a (3R)-hydroxyacyl-[ACP] = a (2E)-enoyl-[ACP] + H2O. Functionally, involved in unsaturated fatty acids biosynthesis. Catalyzes the dehydration of short chain beta-hydroxyacyl-ACPs and long chain saturated and unsaturated beta-hydroxyacyl-ACPs. This chain is 3-hydroxyacyl-[acyl-carrier-protein] dehydratase FabZ, found in Levilactobacillus brevis (strain ATCC 367 / BCRC 12310 / CIP 105137 / JCM 1170 / LMG 11437 / NCIMB 947 / NCTC 947) (Lactobacillus brevis).